Here is a 291-residue protein sequence, read N- to C-terminus: MRKYNDKHIPVLPNEVVEYLLWKDNGIYVDCTAGEGGHTFLIAKKCPNSRVIAIDVDLEVLEIAQKNLKAFHNVILLKASYVDLPVVLKSLGIERVSGILADLGISTYQLKAEGRGFSFNRDEPLDMRMDIQQDTSAHKITNFYSEEKLSKIIFKYGEERFARRIAKQIVKNRPINTTKELVEIIKKALPPSEIRKRKRHFATKTFQAIRIEVNKELKNIEQLLKNAEELLEIGGRLAIISFHSLEDRIVKHFIKNSNNLKHIAGPIKPTQEETKNNPRARSAKLRVAERI.

Residues 36-38, aspartate 55, leucine 88, aspartate 102, and glutamine 109 each bind S-adenosyl-L-methionine; that span reads GGH. Residues 268–291 are disordered; sequence KPTQEETKNNPRARSAKLRVAERI.

Belongs to the methyltransferase superfamily. RsmH family.

It localises to the cytoplasm. It carries out the reaction cytidine(1402) in 16S rRNA + S-adenosyl-L-methionine = N(4)-methylcytidine(1402) in 16S rRNA + S-adenosyl-L-homocysteine + H(+). Functionally, specifically methylates the N4 position of cytidine in position 1402 (C1402) of 16S rRNA. This chain is Ribosomal RNA small subunit methyltransferase H, found in Thermosipho melanesiensis (strain DSM 12029 / CIP 104789 / BI429).